The chain runs to 430 residues: Histidine--tRNA ligase (430 aa).

This sequence belongs to the class-II aminoacyl-tRNA synthetase family. As to quaternary structure, homodimer.

The protein localises to the cytoplasm. The enzyme catalyses tRNA(His) + L-histidine + ATP = L-histidyl-tRNA(His) + AMP + diphosphate + H(+). This Acinetobacter baumannii (strain ATCC 17978 / DSM 105126 / CIP 53.77 / LMG 1025 / NCDC KC755 / 5377) protein is Histidine--tRNA ligase.